Consider the following 195-residue polypeptide: MRKATLDRNTAETKIHLELHVDGKGKYEISTGIRFFDHMLELFTRHGAFDVTLRCEGDLDVDQHHTVEDVGIALGQAFTQALGSKMGILRAGYFVMPMDETLAVAAVDLSGRSAYAVDTKVKVRIVGDLQTELVDDFFEGFSRGALANVHIKVMYGRSNHHKIEASFKAFARALRFACAKDKRLAKVLPSTKGLL.

Belongs to the imidazoleglycerol-phosphate dehydratase family.

The protein resides in the cytoplasm. The catalysed reaction is D-erythro-1-(imidazol-4-yl)glycerol 3-phosphate = 3-(imidazol-4-yl)-2-oxopropyl phosphate + H2O. It functions in the pathway amino-acid biosynthesis; L-histidine biosynthesis; L-histidine from 5-phospho-alpha-D-ribose 1-diphosphate: step 6/9. The sequence is that of Imidazoleglycerol-phosphate dehydratase from Koribacter versatilis (strain Ellin345).